Here is a 327-residue protein sequence, read N- to C-terminus: MADGELNVDSLITRLLEVRGCRPGKIVQMTEAEVRGLCIKSREIFLSQPILLELEAPLKICGDIHGQYTDLLRLFEYGGFPPEANYLFLGDYVDRGKQSLETICLLLAYKIKYPENFFLLRGNHECASINRIYGFYDECKRRFNIKLWKTFTDCFNCLPIAAIVDEKIFCCHGGLSPDLQSMEQIRRIMRPTDVPDTGLLCDLLWSDPDKDVQGWGENDRGVSFTFGADVVSKFLNRHDLDLICRAHQVVEDGYEFFAKRQLVTLFSAPNYCGEFDNAGGMMSVDETLMCSFQILKPSEKKAKYQYGGLNSGRPVTPPRTANPPKKR.

Ala-2 carries the post-translational modification N-acetylalanine. Positions 63, 65, 91, and 123 each coordinate Mn(2+). Residue His-124 is the Proton donor of the active site. Mn(2+) is bound by residues His-172 and His-247. A disordered region spans residues 305-327 (QYGGLNSGRPVTPPRTANPPKKR). Thr-316 is modified (phosphothreonine).

Belongs to the PPP phosphatase family. PP-1 subfamily. PP1 comprises a catalytic subunit, PPP1CA, PPP1CB or PPP1CC, which is folded into its native form by inhibitor 2 and glycogen synthetase kinase 3, and then complexed to one or several targeting or regulatory subunits. The targeting or regulatory subunits determine the substrate specificity of PP1. PPP1R12A, PPP1R12B and PPP1R12C mediate binding to myosin. PPP1R3A (in skeletal muscle), PPP1R3B (in liver), PPP1R3C, PPP1R3D and PPP1R3F (in brain) mediate binding to glycogen. PPP1R15A and PPP1R15B mediate binding to EIF2S1. Part of a complex containing PPP1R15B, PP1 and NCK1/2. Interacts with PPP1R7 and PPP1R12C. Interacts with PPP1R16B. Component of the PTW/PP1 phosphatase complex, composed of PPP1R10/PNUTS, TOX4, WDR82, and PPP1CA or PPP1CB or PPP1CC. Interacts with PPP1R8. Interacts with PPP1R12A and NUAK1; the interaction is direct. Interacts with TRIM28; the interaction is weak. Interacts with FOXP3. Interacts with RRP1B. Interacts with SERPINE1. Interacts with LZTR1. Component of the SHOC2-MRAS-PP1c (SMP) complex consisting of SHOC2, GTP-bound M-Ras/MRAS and the catalytic subunit of protein phosphatase 1 (either PPP1CA, PPP1CB or PPP1CC). SHOC2 and PP1c preferably bind M-Ras/MRAS, but they also bind K-Ras/KRAS, N-Ras/NRAS and H-Ras/HRAS; these interactions are GTP-dependent and both SHOC2 and PP1c are required to form a stable complex. Interacts with SHOC2 in the absence of Ras GTPases. It depends on Mn(2+) as a cofactor.

The protein resides in the cytoplasm. It is found in the nucleus. Its subcellular location is the nucleoplasm. The protein localises to the nucleolus. It carries out the reaction O-phospho-L-seryl-[protein] + H2O = L-seryl-[protein] + phosphate. It catalyses the reaction O-phospho-L-threonyl-[protein] + H2O = L-threonyl-[protein] + phosphate. The catalysed reaction is O-phospho-L-seryl-[myosin light chain] + H2O = L-seryl-[myosin light chain] + phosphate. The enzyme catalyses O-phospho-L-threonyl-[myosin light chain] + H2O = L-threonyl-[myosin light chain] + phosphate. With respect to regulation, inhibited by the toxins okadaic acid, tautomycin and microcystin Leu-Arg. The phosphatase activity of the PPP1R15A-PP1 complex toward EIF2S1 is specifically inhibited by Salubrinal, a drug that protects cells from endoplasmic reticulum stress. Its function is as follows. Protein phosphatase that associates with over 200 regulatory proteins to form highly specific holoenzymes which dephosphorylate hundreds of biological targets. Protein phosphatase (PP1) is essential for cell division, it participates in the regulation of glycogen metabolism, muscle contractility and protein synthesis. Involved in regulation of ionic conductances and long-term synaptic plasticity. Component of the PTW/PP1 phosphatase complex, which plays a role in the control of chromatin structure and cell cycle progression during the transition from mitosis into interphase. In balance with CSNK1D and CSNK1E, determines the circadian period length, through the regulation of the speed and rhythmicity of PER1 and PER2 phosphorylation. May dephosphorylate CSNK1D and CSNK1E. Core component of the SHOC2-MRAS-PP1c (SMP) holophosphatase complex that regulates the MAPK pathway activation. The SMP complex specifically dephosphorylates the inhibitory phosphorylation at 'Ser-259' of RAF1 kinase, 'Ser-365' of BRAF kinase and 'Ser-214' of ARAF kinase, stimulating their kinase activities. The SMP complex enhances the dephosphorylation activity and substrate specificity of PP1c. The sequence is that of Serine/threonine-protein phosphatase PP1-beta catalytic subunit (PPP1CB) from Bos taurus (Bovine).